The primary structure comprises 186 residues: uncharacterized protein (186 aa).

The signal sequence occupies residues 1–18; sequence MNKFLFAAALIVSGLLVG. A lipid anchor (N-palmitoyl cysteine) is attached at cysteine 19. Cysteine 19 is lipidated: S-diacylglycerol cysteine.

It is found in the cell membrane. This is an uncharacterized protein from Escherichia coli (strain K12).